The following is a 255-amino-acid chain: Adenylate dimethylallyltransferase (255 aa).

The protein belongs to the isopentenyl transferase family.

The catalysed reaction is dimethylallyl diphosphate + AMP = N(6)-(dimethylallyl)adenosine 5'-phosphate + diphosphate. In terms of biological role, transfers dimethylallyl groups to AMP as part of the biosynthesis of cytokinin phytohormones. The chain is Adenylate dimethylallyltransferase (fas4) from Rhodococcoides fascians (Rhodococcus fascians).